The following is a 284-amino-acid chain: 2-dehydro-3-deoxyphosphooctonate aldolase (284 aa).

This sequence belongs to the KdsA family.

Its subcellular location is the cytoplasm. The catalysed reaction is D-arabinose 5-phosphate + phosphoenolpyruvate + H2O = 3-deoxy-alpha-D-manno-2-octulosonate-8-phosphate + phosphate. The protein operates within carbohydrate biosynthesis; 3-deoxy-D-manno-octulosonate biosynthesis; 3-deoxy-D-manno-octulosonate from D-ribulose 5-phosphate: step 2/3. It participates in bacterial outer membrane biogenesis; lipopolysaccharide biosynthesis. The protein is 2-dehydro-3-deoxyphosphooctonate aldolase of Cronobacter sakazakii (strain ATCC BAA-894) (Enterobacter sakazakii).